We begin with the raw amino-acid sequence, 140 residues long: Ribosome-binding factor A (140 aa).

The protein belongs to the RbfA family. Monomer. Binds 30S ribosomal subunits, but not 50S ribosomal subunits or 70S ribosomes.

It localises to the cytoplasm. In terms of biological role, one of several proteins that assist in the late maturation steps of the functional core of the 30S ribosomal subunit. Associates with free 30S ribosomal subunits (but not with 30S subunits that are part of 70S ribosomes or polysomes). Required for efficient processing of 16S rRNA. May interact with the 5'-terminal helix region of 16S rRNA. The protein is Ribosome-binding factor A of Cereibacter sphaeroides (strain ATCC 17025 / ATH 2.4.3) (Rhodobacter sphaeroides).